The primary structure comprises 473 residues: Poly(A) polymerase catalytic subunit (473 aa).

Residues Asp-193 and Asp-195 contribute to the active site.

It belongs to the poxviridae poly(A) polymerase catalytic subunit family. As to quaternary structure, heterodimer of a large (catalytic) subunit and a small (regulatory) subunit.

The enzyme catalyses RNA(n) + ATP = RNA(n)-3'-adenine ribonucleotide + diphosphate. Its function is as follows. Polymerase that creates the 3'-poly(A) tail of mRNA's. This is Poly(A) polymerase catalytic subunit (PAPL) from Crocodylus johnstoni (Australian freshwater crocodile).